Here is a 348-residue protein sequence, read N- to C-terminus: S-adenosylmethionine:tRNA ribosyltransferase-isomerase (348 aa).

Belongs to the QueA family. Monomer.

The protein localises to the cytoplasm. The enzyme catalyses 7-aminomethyl-7-carbaguanosine(34) in tRNA + S-adenosyl-L-methionine = epoxyqueuosine(34) in tRNA + adenine + L-methionine + 2 H(+). It participates in tRNA modification; tRNA-queuosine biosynthesis. Transfers and isomerizes the ribose moiety from AdoMet to the 7-aminomethyl group of 7-deazaguanine (preQ1-tRNA) to give epoxyqueuosine (oQ-tRNA). The sequence is that of S-adenosylmethionine:tRNA ribosyltransferase-isomerase from Polynucleobacter asymbioticus (strain DSM 18221 / CIP 109841 / QLW-P1DMWA-1) (Polynucleobacter necessarius subsp. asymbioticus).